The primary structure comprises 309 residues: Partitioning defective protein 6 (309 aa).

The PB1 domain occupies 14 to 96 (TLQVKSKFDS…PLLRLLIQRR (83 aa)). The 18-residue stretch at 132-149 (ISNPEDFRQVSAIIDVDI) folds into the Pseudo-CRIB domain. Residues 156-249 (RVRLCKHGQE…NLIITVKPAN (94 aa)) enclose the PDZ domain. Over residues 249-270 (NQRNTLSRGPSQQGTPNASEMS) the composition is skewed to polar residues. The interval 249-309 (NQRNTLSRGP…DANDSDSGED (61 aa)) is disordered.

The protein belongs to the PAR6 family. As to quaternary structure, interacts with par-3, required for its peripheral localization, and with cdc-42, required for the activation of a par-3/par-6/pkc-3 complex. In terms of tissue distribution, colocalized with par-3 at all stages in early embryos, at the anterior cortex of the embryo. Patchy expression observed at the periphery after completion of meiosis I and in meiosis II, which on completion of metaphase II, is restricted to the anterior 85% of embryo length; this decreases to 55% in embryos between prophase and telophase of the first mitosis. During the first cleavage, expression is detected in the advancing furrow. Along with pkc-3, is unable to associate with the apical cortex of cells that lack par-3. Transiently coexpressed and colocalized with par-3 and pkc-3, asymmetrically in the developing somatic gonad, including the spermathecal precursor cells of L4 larvae.

It localises to the cytoplasm. Its subcellular location is the cell membrane. The protein localises to the cell junction. The protein resides in the tight junction. Necessary for apicobasal and anterior-posterior asymmetries associated with cell adhesion and gastrulation during the first few cell cycles of embryogenesis. Required for localizing/ maintaining par-3 at the cell periphery. Regulates mes-1 expression and/or localization pattern during early embryogenesis. Acts together with par-3 and pkc-3 in maintaining epithelial cell polarity in the distal spermatheca. Plays a role in endosome and Golgi body positioning. The protein is Partitioning defective protein 6 of Caenorhabditis elegans.